Here is a 246-residue protein sequence, read N- to C-terminus: tRNA (guanine-N(1)-)-methyltransferase (246 aa).

S-adenosyl-L-methionine-binding positions include G114 and 134–139; that span reads IGDYIL.

This sequence belongs to the RNA methyltransferase TrmD family. Homodimer.

The protein localises to the cytoplasm. It catalyses the reaction guanosine(37) in tRNA + S-adenosyl-L-methionine = N(1)-methylguanosine(37) in tRNA + S-adenosyl-L-homocysteine + H(+). Specifically methylates guanosine-37 in various tRNAs. The chain is tRNA (guanine-N(1)-)-methyltransferase from Coxiella burnetii (strain CbuK_Q154) (Coxiella burnetii (strain Q154)).